Reading from the N-terminus, the 465-residue chain is Lactaldehyde dehydrogenase (465 aa).

Residue 220–225 participates in NAD(+) binding; that stretch reads GSVEVG. Catalysis depends on residues Glu-240 and Cys-274.

Belongs to the aldehyde dehydrogenase family. Homotetramer.

The enzyme catalyses (S)-lactaldehyde + NAD(+) + H2O = (S)-lactate + NADH + 2 H(+). It participates in cofactor biosynthesis; coenzyme F420 biosynthesis. In terms of biological role, involved in F420 biosynthesis through the oxidation of lactaldehyde to lactate. The protein is Lactaldehyde dehydrogenase of Methanococcus vannielii (strain ATCC 35089 / DSM 1224 / JCM 13029 / OCM 148 / SB).